Consider the following 475-residue polypeptide: Cytochrome P450 monooxygenase opdE (475 aa).

Residues Val10–Leu32 traverse the membrane as a helical segment. Cys457 is a binding site for heme.

It belongs to the cytochrome P450 family. Heme is required as a cofactor.

It is found in the membrane. Its pathway is secondary metabolite biosynthesis. Its function is as follows. Cytochrome P450 monooxygenase; part of the gene cluster that mediates the biosynthesis of oxopyrrolidines, polyketide-amino acid hybrid compounds with feature structures of tetramic acid. Does not seem to play a role in oxopyrrolidines A and B biosynthesis. May be involved in further modifications of these oxopyrrolidines. The chain is Cytochrome P450 monooxygenase opdE from Penicillium oxalicum (strain 114-2 / CGMCC 5302) (Penicillium decumbens).